Here is a 418-residue protein sequence, read N- to C-terminus: Serine--tRNA ligase (418 aa).

Position 228-230 (228-230 (TSE)) interacts with L-serine. Residues 258–260 (RKE) and Val-274 contribute to the ATP site. Glu-281 contributes to the L-serine binding site. Position 345-348 (345-348 (EVVS)) interacts with ATP. Thr-381 lines the L-serine pocket.

This sequence belongs to the class-II aminoacyl-tRNA synthetase family. Type-1 seryl-tRNA synthetase subfamily. Homodimer. The tRNA molecule binds across the dimer.

The protein resides in the cytoplasm. It carries out the reaction tRNA(Ser) + L-serine + ATP = L-seryl-tRNA(Ser) + AMP + diphosphate + H(+). It catalyses the reaction tRNA(Sec) + L-serine + ATP = L-seryl-tRNA(Sec) + AMP + diphosphate + H(+). Its pathway is aminoacyl-tRNA biosynthesis; selenocysteinyl-tRNA(Sec) biosynthesis; L-seryl-tRNA(Sec) from L-serine and tRNA(Sec): step 1/1. Functionally, catalyzes the attachment of serine to tRNA(Ser). Is also able to aminoacylate tRNA(Sec) with serine, to form the misacylated tRNA L-seryl-tRNA(Sec), which will be further converted into selenocysteinyl-tRNA(Sec). The protein is Serine--tRNA ligase of Cenarchaeum symbiosum (strain A).